Reading from the N-terminus, the 145-residue chain is MATNTKYKRDAISIMRDGIKSRYSKDGCCAICGSSEDLELHHYHTISQLIKKFAKELQLDFTDENIVLSNREAFYKKYEHELVRDVVTLCQHHHQLLHKVYTKEPPLFSANKQKAWVQKQKDKIQNPQEKTQVKTETKSGFARFL.

The interval asparagine 126 to leucine 145 is disordered.

In terms of biological role, endonuclease responsible for the single-chain interruptions (nicks) located at specific positions in the minus strand of the viral genome. This chain is Nicking endonuclease, found in Escherichia phage T5 (Enterobacteria phage T5).